The sequence spans 256 residues: 5-oxoprolinase subunit A (256 aa).

It belongs to the LamB/PxpA family. In terms of assembly, forms a complex composed of PxpA, PxpB and PxpC.

The catalysed reaction is 5-oxo-L-proline + ATP + 2 H2O = L-glutamate + ADP + phosphate + H(+). Catalyzes the cleavage of 5-oxoproline to form L-glutamate coupled to the hydrolysis of ATP to ADP and inorganic phosphate. The chain is 5-oxoprolinase subunit A from Geobacillus thermodenitrificans (strain NG80-2).